Reading from the N-terminus, the 233-residue chain is Pilin-like protein PilA3 (233 aa).

The propeptide at 1-4 (MKRG) is leader sequence. Position 5 is an N-methylphenylalanine (F5). Residues 5–25 (FTLVEVLVAMAILVVVLAVGV) traverse the membrane as a helical segment. The tract at residues 121–143 (LRRSDVNATPSSGSDCTTPPPNS) is disordered. Positions 126–137 (VNATPSSGSDCT) are enriched in polar residues.

The protein resides in the cell inner membrane. Its subcellular location is the cell outer membrane. It is found in the periplasm. In terms of biological role, plays an essential role in natural DNA transformation but is not required for pilus biogenesis. This chain is Pilin-like protein PilA3 (pilA3), found in Thermus thermophilus (strain ATCC BAA-163 / DSM 7039 / HB27).